The sequence spans 351 residues: C(7)-cyclitol 7-kinase (351 aa).

The protein belongs to the ROK (NagC/XylR) family.

The enzyme catalyses valienone + ATP = valienone 7-phosphate + ADP + H(+). It carries out the reaction validone + ATP = validone 7-phosphate + ADP + H(+). Involved in the biosynthesis of the antifungal agent validamycin A. Catalyzes the phosphorylation of valienone and validone to their 7-phosphate derivatives. The protein is C(7)-cyclitol 7-kinase of Streptomyces hygroscopicus subsp. jinggangensis (strain 5008).